The following is a 109-amino-acid chain: Ribonuclease P protein component 2 (109 aa).

This sequence belongs to the eukaryotic/archaeal RNase P protein component 2 family. In terms of assembly, consists of a catalytic RNA component and at least 4-5 protein subunits.

It is found in the cytoplasm. The enzyme catalyses Endonucleolytic cleavage of RNA, removing 5'-extranucleotides from tRNA precursor.. Functionally, part of ribonuclease P, a protein complex that generates mature tRNA molecules by cleaving their 5'-ends. The chain is Ribonuclease P protein component 2 from Archaeoglobus fulgidus (strain ATCC 49558 / DSM 4304 / JCM 9628 / NBRC 100126 / VC-16).